The primary structure comprises 425 residues: Proline--tRNA ligase (425 aa).

Belongs to the class-II aminoacyl-tRNA synthetase family. ProS type 2 subfamily. Homodimer.

It localises to the cytoplasm. It carries out the reaction tRNA(Pro) + L-proline + ATP = L-prolyl-tRNA(Pro) + AMP + diphosphate. Functionally, catalyzes the attachment of proline to tRNA(Pro) in a two-step reaction: proline is first activated by ATP to form Pro-AMP and then transferred to the acceptor end of tRNA(Pro). This chain is Proline--tRNA ligase, found in Anaplasma marginale (strain St. Maries).